Reading from the N-terminus, the 237-residue chain is Probable glutathione-independent glyoxalase HSP32 (237 aa).

Residues C138, H139, and E170 contribute to the active site.

Belongs to the peptidase C56 family. HSP31-like subfamily. In terms of assembly, homodimer.

It is found in the cytoplasm. It localises to the P-body. It catalyses the reaction methylglyoxal + H2O = (R)-lactate + H(+). Its function is as follows. Catalyzes the conversion of methylglyoxal (MG) to D-lactate in a single glutathione (GSH)-independent step. May play a role in detoxifying endogenously produced glyoxals. Involved in protection against reactive oxygen species (ROS). Important for viability in stationary phase. May negatively regulate TORC1 in response to nutrient limitation. The sequence is that of Probable glutathione-independent glyoxalase HSP32 from Saccharomyces cerevisiae (strain ATCC 204508 / S288c) (Baker's yeast).